Reading from the N-terminus, the 512-residue chain is D-alanine--D-alanyl carrier protein ligase (512 aa).

152-153 (TS) is a binding site for ATP. D199 is a D-alanine binding site. Position 294–299 (294–299 (NAYGPT)) interacts with ATP. V303 contacts D-alanine. ATP is bound by residues D385, 397 to 400 (YGGR), and K499. K499 lines the D-alanine pocket.

It belongs to the ATP-dependent AMP-binding enzyme family. DltA subfamily.

It localises to the cytoplasm. It catalyses the reaction holo-[D-alanyl-carrier protein] + D-alanine + ATP = D-alanyl-[D-alanyl-carrier protein] + AMP + diphosphate. Its pathway is cell wall biogenesis; lipoteichoic acid biosynthesis. Catalyzes the first step in the D-alanylation of lipoteichoic acid (LTA), the activation of D-alanine and its transfer onto the D-alanyl carrier protein (Dcp) DltC. In an ATP-dependent two-step reaction, forms a high energy D-alanyl-AMP intermediate, followed by transfer of the D-alanyl residue as a thiol ester to the phosphopantheinyl prosthetic group of the Dcp. D-alanylation of LTA plays an important role in modulating the properties of the cell wall in Gram-positive bacteria, influencing the net charge of the cell wall. The chain is D-alanine--D-alanyl carrier protein ligase from Streptococcus pyogenes serotype M18 (strain MGAS8232).